Here is a 193-residue protein sequence, read N- to C-terminus: MPKGRRGSQSPTMSQRPAPPLYFPSLYDRGISSSPLSDFNIWKKLFVPLKAGGAPAGGAPAAGGRSLPQGPSAPAPPPPPGLGPPSERPCPPPWPSGLASIPYEPLRFFYSPPSGPEAAASPLAPGPMTSRLASASHPEELCELEIRIKELELLTITGDGFDSQRYKFLKALKDEKLQGLKTRQPGKKSASLS.

Disordered regions lie at residues 1–21, 53–96, and 114–136; these read MPKGRRGSQSPTMSQRPAPPL, GAPA…PWPS, and SGPEAAASPLAPGPMTSRLASAS. The segment covering 53–70 has biased composition (low complexity); that stretch reads GAPAGGAPAAGGRSLPQG. Residues 71 to 95 show a composition bias toward pro residues; that stretch reads PSAPAPPPPPGLGPPSERPCPPPWP. Over residues 116–127 the composition is skewed to low complexity; that stretch reads PEAAASPLAPGP.

This is an uncharacterized protein from Bos taurus (Bovine).